A 689-amino-acid chain; its full sequence is MSKHTVLFELGCEELPPKSLKTLRDALQAETVKGLNEAGLDFASVEAYAAPRRLALKIVDVDAAQADTQKRFDGPAVQAAYDAEGKPTKALEGFMRGQGITVDQLSTFQAGKVEKVCYLKDVKGQSLDALLPQILQTALDNLPIAKRMRSAASRTEFVRPVKWVVLLKDDQVIEATIQDHKAGNVTYGHRFHAPEAVTLAHANDYLAALEKAYVVANFEKRQATIQEQVKKLADEVNATAIVPADLLDEVTSLVEWPVALRATFEERYLAVPQEALITTMQDNQKYFCLINAEGKLQPYFITVSNIESKDSTQIIEGNEKVVRPRLSDAEFFFLQDQKQPLASRKEKLANMVFQAQLGTLWDKSTRIAKLAVALSSITGANPADAEKAALLAKCDLTSELVGEFPELQGIAGTYYARIEGENTEVSEALGEQYLPKFAGDVLPKTKTGTTIALADRLDTLVGIFGIGQAPTGSKDPFALRRSAIGILRLIIENELDVTIEELVNLALQGYGDIVKDHDKTRADAVAFLEGRYRAKYEDQGVAVDVLQAVQALAPKSPLDFDKRVNAVNHFRTLPEAAALAAANKRVANILAKEAAPEGSVIEANLVEDAEKALFAELQAVTPVVEPLLAAKDYTAALSKLAALRAPIDAFFDGVMVMADDADLKANRLRLLAQLRNLFTAVADVSVLQG.

This sequence belongs to the class-II aminoacyl-tRNA synthetase family. In terms of assembly, tetramer of two alpha and two beta subunits.

It is found in the cytoplasm. It catalyses the reaction tRNA(Gly) + glycine + ATP = glycyl-tRNA(Gly) + AMP + diphosphate. This is Glycine--tRNA ligase beta subunit from Acinetobacter baumannii (strain ATCC 17978 / DSM 105126 / CIP 53.77 / LMG 1025 / NCDC KC755 / 5377).